The chain runs to 672 residues: Beta-galactosidase bgaB (672 aa).

Substrate is bound at residue Arg109. Cys113 is a binding site for Zn(2+). Substrate is bound at residue Asn147. The Proton donor role is filled by Glu148. Residues Cys156, Cys158, and Cys161 each coordinate Zn(2+). Glu303 serves as the catalytic Nucleophile. Residues Trp311 and 351 to 354 (EKFH) contribute to the substrate site.

This sequence belongs to the glycosyl hydrolase 42 family.

The enzyme catalyses Hydrolysis of terminal non-reducing beta-D-galactose residues in beta-D-galactosides.. With respect to regulation, by divalent metal ions. Fe(2+), Zn(2+), Cu(2+), Pb(2+) and Sn(2+) inhibit 52, 76.6, 85.3, 100 and 100% of the enzyme activity, respectively. Other metal cations and EDTA do not inhibit this enzyme. Thiol reagents 2-mercaptoethanol and dithiothreitol have no effect on the activity. Sulfhydryl group-blocking reagents p-chloromercuribenzoic acid and iodoacetic acid inhibit 86.2 and 74% of the enzyme activity, respectively. Functionally, hydrolyzes 6-bromo-2-naphthyl-beta-D-galactopyranoside and o-nitrophenyl-beta-D-galactopyranoside (ONPG). Possesses a high level of transgalactosylation activity. Hydrolyzes lactose in milk. The protein is Beta-galactosidase bgaB (bgaB) of Geobacillus kaustophilus.